The sequence spans 491 residues: Ketol-acid reductoisomerase (NADP(+)) (491 aa).

Residues 15-208 (AQLGKCRFMG…GGHRAGVLES (194 aa)) form the KARI N-terminal Rossmann domain. Residues 45–48 (CGAQ), arginine 68, arginine 76, serine 78, and 108–110 (DKQ) contribute to the NADP(+) site. Histidine 132 is a catalytic residue. Glycine 158 lines the NADP(+) pocket. KARI C-terminal knotted domains follow at residues 209–344 (SFVA…TAPQ) and 345–484 (YEGK…MTDM). Residues aspartate 217, glutamate 221, glutamate 389, and glutamate 393 each coordinate Mg(2+). Residue serine 414 participates in substrate binding.

Belongs to the ketol-acid reductoisomerase family. Mg(2+) is required as a cofactor.

It catalyses the reaction (2R)-2,3-dihydroxy-3-methylbutanoate + NADP(+) = (2S)-2-acetolactate + NADPH + H(+). The enzyme catalyses (2R,3R)-2,3-dihydroxy-3-methylpentanoate + NADP(+) = (S)-2-ethyl-2-hydroxy-3-oxobutanoate + NADPH + H(+). Its pathway is amino-acid biosynthesis; L-isoleucine biosynthesis; L-isoleucine from 2-oxobutanoate: step 2/4. It functions in the pathway amino-acid biosynthesis; L-valine biosynthesis; L-valine from pyruvate: step 2/4. Functionally, involved in the biosynthesis of branched-chain amino acids (BCAA). Catalyzes an alkyl-migration followed by a ketol-acid reduction of (S)-2-acetolactate (S2AL) to yield (R)-2,3-dihydroxy-isovalerate. In the isomerase reaction, S2AL is rearranged via a Mg-dependent methyl migration to produce 3-hydroxy-3-methyl-2-ketobutyrate (HMKB). In the reductase reaction, this 2-ketoacid undergoes a metal-dependent reduction by NADPH to yield (R)-2,3-dihydroxy-isovalerate. The chain is Ketol-acid reductoisomerase (NADP(+)) from Klebsiella pneumoniae (strain 342).